A 352-amino-acid chain; its full sequence is MDYQVSSPTYDIDYYTSEPCQKVNVKQIAARLLPPLYSLVFIFGFVGNILVVLILINCKRLKSMTDIYLLNLAISDLFFLLTVPFWAHYAAAQWDFGNTMCQLLTGLYFIGFFSGIFFIILLTIDRYLAIVHAVFALKARTVTFGVVTSVITWVVAVFASLPGIIFTRSQREGLHYTCSSHFPYSQYQFWKNFQTLKIVILGLVLPLLVMVICYSGILKTLLRCRNEKKRHRAVRLIFTIMIVYFLFWAPYNIVLLLNTFQEFFGLNNCSSSNRLDQAMQVTETLGMTHCCINPIIYAFVGEKFRNYLLVFFQKHIAKRFCKCCSIFQQEAPERASSVYTRSTGEQEISVGL.

Over 1–30 the chain is Extracellular; the sequence is MDYQVSSPTYDIDYYTSEPCQKVNVKQIAA. Position 3 is a sulfotyrosine (Tyr3). O-linked (GalNAc...) serine glycans are attached at residues Ser6 and Ser7. Tyr10, Tyr14, and Tyr15 each carry sulfotyrosine. Intrachain disulfides connect Cys20/Cys269 and Cys101/Cys178. Residues 31 to 58 traverse the membrane as a helical segment; sequence RLLPPLYSLVFIFGFVGNILVVLILINC. The Cytoplasmic segment spans residues 59–68; it reads KRLKSMTDIY. Residues 69–89 form a helical membrane-spanning segment; the sequence is LLNLAISDLFFLLTVPFWAHY. Residues 90-102 are Extracellular-facing; the sequence is AAAQWDFGNTMCQ. Residues 103 to 124 form a helical membrane-spanning segment; sequence LLTGLYFIGFFSGIFFIILLTI. Over 125-141 the chain is Cytoplasmic; it reads DRYLAIVHAVFALKART. The chain crosses the membrane as a helical span at residues 142 to 166; it reads VTFGVVTSVITWVVAVFASLPGIIF. Topologically, residues 167-198 are extracellular; that stretch reads TRSQREGLHYTCSSHFPYSQYQFWKNFQTLKI. A helical transmembrane segment spans residues 199 to 218; the sequence is VILGLVLPLLVMVICYSGIL. Over 219-235 the chain is Cytoplasmic; the sequence is KTLLRCRNEKKRHRAVR. A helical transmembrane segment spans residues 236 to 260; it reads LIFTIMIVYFLFWAPYNIVLLLNTF. At 261-277 the chain is on the extracellular side; sequence QEFFGLNNCSSSNRLDQ. The chain crosses the membrane as a helical span at residues 278-301; it reads AMQVTETLGMTHCCINPIIYAFVG. Topologically, residues 302–352 are cytoplasmic; that stretch reads EKFRNYLLVFFQKHIAKRFCKCCSIFQQEAPERASSVYTRSTGEQEISVGL. 3 S-palmitoyl cysteine lipidation sites follow: Cys321, Cys323, and Cys324. Phosphoserine; by BARK1 is present on residues Ser336, Ser337, Ser342, and Ser349.

Belongs to the G-protein coupled receptor 1 family. Interacts with PRAF2. Efficient ligand binding to CCL3/MIP-1alpha and CCL4/MIP-1beta requires sulfation, O-glycosylation and sialic acid modifications. Glycosylation on Ser-6 is required for efficient binding of CCL4. Interacts with GRK2. Interacts with ARRB1 and ARRB2. Interacts with CNIH4. Interacts with S100A4; this interaction stimulates T-lymphocyte chemotaxis. In terms of processing, sulfated on at least 2 of the N-terminal tyrosines. Sulfation is required for efficient binding of the chemokines, CCL3 and CCL4. Post-translationally, palmitoylation in the C-terminal is important for cell surface expression. Phosphorylation on serine residues in the C-terminal is stimulated by binding CC chemokines especially by APO-RANTES. In terms of processing, O-glycosylated, but not N-glycosylated. Ser-6 appears to be the major site even if Ser-7 may be also O-glycosylated. Also sialylated glycans present which contribute to chemokine binding. Thr-16 and Ser-17 may also be glycosylated and, if so, with small moieties such as a T-antigen.

It is found in the cell membrane. In terms of biological role, receptor for a number of inflammatory CC-chemokines including CCL3/MIP-1-alpha, CCL4/MIP-1-beta and RANTES and subsequently transduces a signal by increasing the intracellular calcium ion level. May play a role in the control of granulocytic lineage proliferation or differentiation. Participates in T-lymphocyte migration to the infection site by acting as a chemotactic receptor. The polypeptide is C-C chemokine receptor type 5 (CCR5) (Semnopithecus entellus (Northern plains gray langur)).